We begin with the raw amino-acid sequence, 504 residues long: Anaerobic nitric oxide reductase transcription regulator NorR (504 aa).

D57 is modified (4-aspartylphosphate). Residues 187–416 (MIGLSPGMTQ…LEHAIHRAVV (230 aa)) form the Sigma-54 factor interaction domain. ATP is bound by residues 215–222 (GETGTGKE) and 278–287 (ADNGTLFLDE). The segment at residues 479–498 (WAACARMLETDVANLHRLAK) is a DNA-binding region (H-T-H motif).

Its pathway is nitrogen metabolism; nitric oxide reduction. Required for the expression of anaerobic nitric oxide (NO) reductase, acts as a transcriptional activator for at least the norVW operon. Activation also requires sigma-54. This chain is Anaerobic nitric oxide reductase transcription regulator NorR, found in Escherichia coli O157:H7.